The sequence spans 179 residues: Large ribosomal subunit protein uL5 (179 aa).

Belongs to the universal ribosomal protein uL5 family. Part of the 50S ribosomal subunit; part of the 5S rRNA/L5/L18/L25 subcomplex. Contacts the 5S rRNA and the P site tRNA. Forms a bridge to the 30S subunit in the 70S ribosome.

Its function is as follows. This is one of the proteins that bind and probably mediate the attachment of the 5S RNA into the large ribosomal subunit, where it forms part of the central protuberance. In the 70S ribosome it contacts protein S13 of the 30S subunit (bridge B1b), connecting the 2 subunits; this bridge is implicated in subunit movement. Contacts the P site tRNA; the 5S rRNA and some of its associated proteins might help stabilize positioning of ribosome-bound tRNAs. This Nitrosomonas europaea (strain ATCC 19718 / CIP 103999 / KCTC 2705 / NBRC 14298) protein is Large ribosomal subunit protein uL5.